We begin with the raw amino-acid sequence, 471 residues long: Cysteine--tRNA ligase (471 aa).

Cys30 contributes to the Zn(2+) binding site. The short motif at 32–42 (PTVYNFAHIGN) is the 'HIGH' region element. The Zn(2+) site is built by Cys212, His237, and Glu241. Residues 270–274 (KMSKS) carry the 'KMSKS' region motif. Lys273 serves as a coordination point for ATP.

It belongs to the class-I aminoacyl-tRNA synthetase family. As to quaternary structure, monomer. It depends on Zn(2+) as a cofactor.

The protein resides in the cytoplasm. The enzyme catalyses tRNA(Cys) + L-cysteine + ATP = L-cysteinyl-tRNA(Cys) + AMP + diphosphate. This chain is Cysteine--tRNA ligase, found in Leptospira interrogans serogroup Icterohaemorrhagiae serovar Lai (strain 56601).